Here is a 213-residue protein sequence, read N- to C-terminus: Large ribosomal subunit protein uL1 (213 aa).

Belongs to the universal ribosomal protein uL1 family. In terms of assembly, part of the 50S ribosomal subunit.

Binds directly to 23S rRNA. Probably involved in E site tRNA release. Its function is as follows. Protein L1 is also a translational repressor protein, it controls the translation of its operon by binding to its mRNA. This chain is Large ribosomal subunit protein uL1, found in Methanococcus maripaludis (strain C6 / ATCC BAA-1332).